Consider the following 403-residue polypeptide: Acetylornithine/succinyldiaminopimelate aminotransferase (403 aa).

Pyridoxal 5'-phosphate contacts are provided by residues 107–108 (GA) and F140. A N(2)-acetyl-L-ornithine-binding site is contributed by R143. 225 to 228 (DEVQ) lines the pyridoxal 5'-phosphate pocket. Position 254 is an N6-(pyridoxal phosphate)lysine (K254). T282 contributes to the N(2)-acetyl-L-ornithine binding site. A pyridoxal 5'-phosphate-binding site is contributed by T283.

This sequence belongs to the class-III pyridoxal-phosphate-dependent aminotransferase family. ArgD subfamily. Homodimer. It depends on pyridoxal 5'-phosphate as a cofactor.

The protein localises to the cytoplasm. The enzyme catalyses N(2)-acetyl-L-ornithine + 2-oxoglutarate = N-acetyl-L-glutamate 5-semialdehyde + L-glutamate. It carries out the reaction N-succinyl-(2S,6S)-2,6-diaminopimelate + 2-oxoglutarate = (S)-2-succinylamino-6-oxoheptanedioate + L-glutamate. Its pathway is amino-acid biosynthesis; L-arginine biosynthesis; N(2)-acetyl-L-ornithine from L-glutamate: step 4/4. The protein operates within amino-acid biosynthesis; L-lysine biosynthesis via DAP pathway; LL-2,6-diaminopimelate from (S)-tetrahydrodipicolinate (succinylase route): step 2/3. Functionally, involved in both the arginine and lysine biosynthetic pathways. This Photorhabdus laumondii subsp. laumondii (strain DSM 15139 / CIP 105565 / TT01) (Photorhabdus luminescens subsp. laumondii) protein is Acetylornithine/succinyldiaminopimelate aminotransferase.